Consider the following 199-residue polypeptide: Holliday junction branch migration complex subunit RuvA (199 aa).

The interval Met1–Ala64 is domain I. The tract at residues Thr65 to Arg143 is domain II. Positions Leu144–Ala154 are flexible linker. A domain III region spans residues Ala154–Ala199.

It belongs to the RuvA family. Homotetramer. Forms an RuvA(8)-RuvB(12)-Holliday junction (HJ) complex. HJ DNA is sandwiched between 2 RuvA tetramers; dsDNA enters through RuvA and exits via RuvB. An RuvB hexamer assembles on each DNA strand where it exits the tetramer. Each RuvB hexamer is contacted by two RuvA subunits (via domain III) on 2 adjacent RuvB subunits; this complex drives branch migration. In the full resolvosome a probable DNA-RuvA(4)-RuvB(12)-RuvC(2) complex forms which resolves the HJ.

Its subcellular location is the cytoplasm. In terms of biological role, the RuvA-RuvB-RuvC complex processes Holliday junction (HJ) DNA during genetic recombination and DNA repair, while the RuvA-RuvB complex plays an important role in the rescue of blocked DNA replication forks via replication fork reversal (RFR). RuvA specifically binds to HJ cruciform DNA, conferring on it an open structure. The RuvB hexamer acts as an ATP-dependent pump, pulling dsDNA into and through the RuvAB complex. HJ branch migration allows RuvC to scan DNA until it finds its consensus sequence, where it cleaves and resolves the cruciform DNA. The polypeptide is Holliday junction branch migration complex subunit RuvA (Azoarcus sp. (strain BH72)).